We begin with the raw amino-acid sequence, 152 residues long: Large ribosomal subunit protein uL30 (152 aa).

The protein belongs to the universal ribosomal protein uL30 family. As to quaternary structure, part of the 50S ribosomal subunit.

The sequence is that of Large ribosomal subunit protein uL30 from Archaeoglobus fulgidus (strain ATCC 49558 / DSM 4304 / JCM 9628 / NBRC 100126 / VC-16).